An 804-amino-acid polypeptide reads, in one-letter code: Leucine--tRNA ligase (804 aa).

Positions 40-51 match the 'HIGH' region motif; the sequence is PYPSGQGLHVGH. The 'KMSKS' region motif lies at 576-580; the sequence is KMSKS. Residue K579 participates in ATP binding.

The protein belongs to the class-I aminoacyl-tRNA synthetase family.

Its subcellular location is the cytoplasm. The catalysed reaction is tRNA(Leu) + L-leucine + ATP = L-leucyl-tRNA(Leu) + AMP + diphosphate. This Oceanobacillus iheyensis (strain DSM 14371 / CIP 107618 / JCM 11309 / KCTC 3954 / HTE831) protein is Leucine--tRNA ligase.